Consider the following 934-residue polypeptide: Intimin (934 aa).

The N-terminal stretch at 1–39 (MITHGCYTRTRHKHKLKKTLIMLSAGLGLFFYVNQNSFA) is a signal peptide. The tract at residues 40–153 (NGENYFKLGS…KLTKMSPDVT (114 aa)) is peptidoglycan-binding. Residues 40-153 (NGENYFKLGS…KLTKMSPDVT (114 aa)) form a sufficient for homodimerization region. Residues 40–212 (NGENYFKLGS…LQAWLQHYGT (173 aa)) form a required for periplasmic localization region. In terms of domain architecture, LysM spans 63 to 112 (LFYTLKTGETVADLSKSQDINLSTIWSLNKHLYSSESEMMKAAPGQQIIL). Positions 210–411 (YGTAEVNLQS…LYSMQFRYQF (202 aa)) are inverse autotransporter. A signature sequence for beta-barrel assembly machinery (BAM), which recognizes the unfolded beta-barrel in the periplasm region spans residues 402–411 (LYSMQFRYQF). Residues 437-449 (LVQRNNNIILEYK) are minimum linker residues necessary for formation of a heat-modifiable beta-barrel. 2 Big-1 domains span residues 560–653 (VTDF…VIFF) and 660–753 (ITEI…VTFF). The segment at 747–934 (ATEVTFFDEL…TPNVYAVCVE (188 aa)) is intimin receptor Tir-binding. In terms of domain architecture, BIG2 spans 787–833 (ASGGDGTYSWYSENTSIATVDASGKVTLNGKGSVVIKATSGDKQTVS). A disulfide bridge connects residues cysteine 858 and cysteine 932.

This sequence belongs to the intimin/invasin family. Homodimer. Interacts with Tir.

It is found in the cell outer membrane. Functionally, an inverse autotransporter. Adhesin, which mediates attachment to the human intestine epithelial cells. Necessary for the production of attaching and effacing lesions on infected human tissue culture cells. Anchored to the outer membrane by binding to peptidoglycan (PGN) via its periplasmic domain, thus helping in receptor interactions during host invasion. PGN-binding may also aid in resisting mechanical and chemical stress during transit of the bacterium through the gastrointestinal tract of the host. This is Intimin from Escherichia coli O157:H7.